Reading from the N-terminus, the 203-residue chain is Putative 3-methyladenine DNA glycosylase (203 aa).

Belongs to the DNA glycosylase MPG family.

The sequence is that of Putative 3-methyladenine DNA glycosylase from Staphylococcus saprophyticus subsp. saprophyticus (strain ATCC 15305 / DSM 20229 / NCIMB 8711 / NCTC 7292 / S-41).